The sequence spans 312 residues: MLGKGVVDYTREGSILSAEQRRFYEKNGYLLIRNCVPQYELNRFRQRFQDICEKKVKAPENMTVMKDISIAKSEFKDGEKAITKIQDFADDPVLFEYCKYPGVVDVVKDLIGNPKSNLMAMHTMLINKPPDNGKLTSRHPMHQDLQYFPFRPADFICCAWTAMEKITRANGCLVVVPGTHKGVLLPHEYPKWEGGVNKAYHGIQDYDTSTPRIHVEMEPGDTVFFHPILIHGSGANRTEGFRKAISCHYANDDLCRYVNVEGTTQETLAEEIIEIAKKRLTRYGLDPNTVTLDFADIWRVRAREVNGRRSNL.

2-oxoglutarate-binding positions include K84, M124, 142–144 (HQD), and W160. Residues H142 and D144 each contribute to the Fe cation site. Position 231 (H231) interacts with Fe cation. 2-oxoglutarate is bound by residues S233 and R242.

The protein belongs to the PhyH family. Requires Fe cation as cofactor. L-ascorbate serves as cofactor.

It catalyses the reaction phytanoyl-CoA + 2-oxoglutarate + O2 = 2-hydroxyphytanoyl-CoA + succinate + CO2. It functions in the pathway lipid metabolism; fatty acid metabolism. Converts phytanoyl-CoA to 2-hydroxyphytanoyl-CoA. This Caenorhabditis elegans protein is Probable phytanoyl-CoA dioxygenase.